A 441-amino-acid polypeptide reads, in one-letter code: Mannose-6-phosphate isomerase 2 (441 aa).

Zn(2+) contacts are provided by glutamine 131, histidine 133, glutamate 158, and histidine 296. Arginine 315 is a catalytic residue.

This sequence belongs to the mannose-6-phosphate isomerase type 1 family. Zn(2+) is required as a cofactor. As to expression, not expressed in any organs under light (at protein level).

It carries out the reaction D-mannose 6-phosphate = D-fructose 6-phosphate. Its pathway is nucleotide-sugar biosynthesis; GDP-alpha-D-mannose biosynthesis; alpha-D-mannose 1-phosphate from D-fructose 6-phosphate: step 1/2. Inhibited by EDTA, Zn(2+), Cd(2+), DTT, p-chloromercuribenzoate and L-ascorbic acid (AsA). Functionally, involved in the synthesis of the GDP-mannose and dolichol-phosphate-mannose required for a number of critical mannosyl transfer reactions. The chain is Mannose-6-phosphate isomerase 2 (PMI2) from Arabidopsis thaliana (Mouse-ear cress).